The following is a 281-amino-acid chain: 2,3,4,5-tetrahydropyridine-2,6-dicarboxylate N-succinyltransferase (281 aa).

Substrate is bound by residues R108 and D145.

It belongs to the transferase hexapeptide repeat family. As to quaternary structure, homotrimer.

The protein resides in the cytoplasm. It carries out the reaction (S)-2,3,4,5-tetrahydrodipicolinate + succinyl-CoA + H2O = (S)-2-succinylamino-6-oxoheptanedioate + CoA. It functions in the pathway amino-acid biosynthesis; L-lysine biosynthesis via DAP pathway; LL-2,6-diaminopimelate from (S)-tetrahydrodipicolinate (succinylase route): step 1/3. The protein is 2,3,4,5-tetrahydropyridine-2,6-dicarboxylate N-succinyltransferase of Nitrobacter winogradskyi (strain ATCC 25391 / DSM 10237 / CIP 104748 / NCIMB 11846 / Nb-255).